A 255-amino-acid chain; its full sequence is MKTLTVKEIKEHLQSVSDEKDPFIEQCKNDERKSVQALVDAWLKKNERLSAMREEWQAMTSFERSLRARGYQYIAGIDEAGRGPLAGPVVAAAVILKEDCEILGLTDSKKLSKQKREDYYSYIMEEAAAVGVGIADAHEIDELNIYEASKAAMLKAVQALDVAPDYLLIDAMSLAVDTEQSSIIKGDAKSASIAAGACIAKVTRDRLMDEYAEKYPLYGFEKHKGYGTKEHLNALAKYGPSPIHRRSFAPVKAHE.

Residues 72–255 (QYIAGIDEAG…RSFAPVKAHE (184 aa)) enclose the RNase H type-2 domain. A divalent metal cation contacts are provided by Asp-78, Glu-79, and Asp-170.

This sequence belongs to the RNase HII family. Mn(2+) is required as a cofactor. It depends on Mg(2+) as a cofactor.

It is found in the cytoplasm. It catalyses the reaction Endonucleolytic cleavage to 5'-phosphomonoester.. Functionally, endonuclease that specifically degrades the RNA of RNA-DNA hybrids. This is Ribonuclease HII from Bacillus licheniformis (strain ATCC 14580 / DSM 13 / JCM 2505 / CCUG 7422 / NBRC 12200 / NCIMB 9375 / NCTC 10341 / NRRL NRS-1264 / Gibson 46).